The sequence spans 329 residues: NAD kinase (329 aa).

The tract at residues 1-26 (MTTPGTDHNADQGADSGDKATKAASG) is disordered. Residue Asp-104 is the Proton acceptor of the active site. NAD(+) contacts are provided by residues 104 to 105 (DG), Arg-109, 179 to 180 (NE), Asp-209, and 220 to 225 (TAYAFS).

This sequence belongs to the NAD kinase family. A divalent metal cation is required as a cofactor.

It localises to the cytoplasm. It carries out the reaction NAD(+) + ATP = ADP + NADP(+) + H(+). Involved in the regulation of the intracellular balance of NAD and NADP, and is a key enzyme in the biosynthesis of NADP. Catalyzes specifically the phosphorylation on 2'-hydroxyl of the adenosine moiety of NAD to yield NADP. The sequence is that of NAD kinase from Corynebacterium jeikeium (strain K411).